The following is a 199-amino-acid chain: Superoxide dismutase [Mn/Fe] (199 aa).

Residues H27, H81, D161, and H165 each coordinate Fe(3+). Mn(2+)-binding residues include H27, H81, D161, and H165.

The protein belongs to the iron/manganese superoxide dismutase family. In terms of assembly, homodimer. It depends on Mn(2+) as a cofactor. The cofactor is Fe(3+).

It catalyses the reaction 2 superoxide + 2 H(+) = H2O2 + O2. Destroys superoxide anion radicals which are normally produced within the cells and which are toxic to biological systems. Catalyzes the dismutation of superoxide anion radicals into O2 and H2O2 by successive reduction and oxidation of the transition metal ion at the active site. This is Superoxide dismutase [Mn/Fe] (sodA) from Staphylococcus saprophyticus subsp. saprophyticus (strain ATCC 15305 / DSM 20229 / NCIMB 8711 / NCTC 7292 / S-41).